A 367-amino-acid chain; its full sequence is 3-dehydroquinate synthase (367 aa).

NAD(+)-binding positions include 72–77 (DGENYK), 106–110 (GVIGD), 130–131 (TT), lysine 143, lysine 152, and 170–173 (FLST). Residues glutamate 185, histidine 248, and histidine 265 each coordinate Zn(2+).

Belongs to the sugar phosphate cyclases superfamily. Dehydroquinate synthase family. Requires Co(2+) as cofactor. It depends on Zn(2+) as a cofactor. NAD(+) serves as cofactor.

It is found in the cytoplasm. It catalyses the reaction 7-phospho-2-dehydro-3-deoxy-D-arabino-heptonate = 3-dehydroquinate + phosphate. Its pathway is metabolic intermediate biosynthesis; chorismate biosynthesis; chorismate from D-erythrose 4-phosphate and phosphoenolpyruvate: step 2/7. In terms of biological role, catalyzes the conversion of 3-deoxy-D-arabino-heptulosonate 7-phosphate (DAHP) to dehydroquinate (DHQ). This Buchnera aphidicola subsp. Cinara cedri (strain Cc) protein is 3-dehydroquinate synthase.